Reading from the N-terminus, the 705-residue chain is Polyribonucleotide nucleotidyltransferase (705 aa).

Residues Asp486 and Asp492 each contribute to the Mg(2+) site. Residues 553–612 (PRIHTMKVSQDKIRDIIGKGGATIRQLTEETGTTIEIEDDGTVKIAATSGEQAEDAINRI) enclose the KH domain. In terms of domain architecture, S1 motif spans 622 to 690 (GTLYTGKVVR…RQGRVRLSIK (69 aa)).

This sequence belongs to the polyribonucleotide nucleotidyltransferase family. Component of the RNA degradosome, which is a multiprotein complex involved in RNA processing and mRNA degradation. Mg(2+) serves as cofactor.

Its subcellular location is the cytoplasm. It catalyses the reaction RNA(n+1) + phosphate = RNA(n) + a ribonucleoside 5'-diphosphate. Its function is as follows. Involved in mRNA degradation. Catalyzes the phosphorolysis of single-stranded polyribonucleotides processively in the 3'- to 5'-direction. The chain is Polyribonucleotide nucleotidyltransferase from Colwellia psychrerythraea (strain 34H / ATCC BAA-681) (Vibrio psychroerythus).